A 247-amino-acid polypeptide reads, in one-letter code: MSKLFWAMLSFITRLPVPRRWSQGLDFEHYSRGIITFPLIGLLLGAISGLVFMVLQAWCGAPLAALFSVLVLALMTGEFHLDGLADTCDGVFSARSRDRMLEIMRDSRLGTHGGLALIFVVLAKILVLSELALRGEPILASLAAACAVSRGTAALLMYRHRYAREEGLGNVFIGKIDGRQTCVTLGLAAIFAAVLLLGMHGVAAMVVTMVAIFILGQLLKRTLDGQTGDTLGAAIELGELVFLLALL.

Transmembrane regions (helical) follow at residues 34–54 (IITF…VFMV), 57–77 (AWCG…LMTG), 113–133 (GGLA…ELAL), 138–158 (ILAS…LLMY), and 194–214 (VLLL…AIFI).

This sequence belongs to the CobS family. The cofactor is Mg(2+).

Its subcellular location is the cell inner membrane. The enzyme catalyses alpha-ribazole + adenosylcob(III)inamide-GDP = adenosylcob(III)alamin + GMP + H(+). It carries out the reaction alpha-ribazole 5'-phosphate + adenosylcob(III)inamide-GDP = adenosylcob(III)alamin 5'-phosphate + GMP + H(+). The protein operates within cofactor biosynthesis; adenosylcobalamin biosynthesis; adenosylcobalamin from cob(II)yrinate a,c-diamide: step 7/7. Its function is as follows. Joins adenosylcobinamide-GDP and alpha-ribazole to generate adenosylcobalamin (Ado-cobalamin). Also synthesizes adenosylcobalamin 5'-phosphate from adenosylcobinamide-GDP and alpha-ribazole 5'-phosphate. The protein is Adenosylcobinamide-GDP ribazoletransferase of Shigella flexneri serotype 5b (strain 8401).